Reading from the N-terminus, the 225-residue chain is UPF0128 protein PH1314 (225 aa).

The protein belongs to the UPF0128 family.

This Pyrococcus horikoshii (strain ATCC 700860 / DSM 12428 / JCM 9974 / NBRC 100139 / OT-3) protein is UPF0128 protein PH1314.